We begin with the raw amino-acid sequence, 772 residues long: Ribosomal protein S6 kinase alpha-4 (772 aa).

One can recognise a Protein kinase 1 domain in the interval 33 to 301; that stretch reads FELLKVLGTG…AQEVRNHPFF (269 aa). ATP contacts are provided by residues 39–47 and Lys65; that span reads LGTGAYGKV. Catalysis depends on Asp161, which acts as the Proton acceptor. Ser196 is subject to Phosphoserine; by autocatalysis. One can recognise an AGC-kinase C-terminal domain in the interval 302-371; it reads QGLDWVALAA…VAPSILFDHN (70 aa). Residue Ser343 is modified to Phosphoserine; by MAPK1, MAPK3 and MAPK14. Ser347 is modified (phosphoserine). Phosphoserine; by autocatalysis occurs at positions 360 and 365. In terms of domain architecture, Protein kinase 2 spans 411-674; the sequence is DLREPALGQG…LEGLRGSSWL (264 aa). Residues 417–425 and Lys440 contribute to the ATP site; that span reads LGQGSFSVC. The active-site Proton acceptor is the Asp530. Position 542 is a phosphothreonine (Thr542). Thr568 is modified (phosphothreonine; by MAPK1, MAPK3 and MAPK14). Phosphoserine occurs at positions 634 and 678. Disordered regions lie at residues 673–696 and 728–772; these read WLQD…SSGP and AKRR…LPPS. Thr687 is modified (phosphothreonine). The required for nuclear targeting and association with MAPK14 stretch occupies residues 725 to 772; that stretch reads APLAKRRKQKLRSATASRRGSPAPANPGRAPVASKGAPRRANGPLPPS. Residue Ser737 is modified to Phosphoserine; by autocatalysis. A Phosphoserine modification is found at Ser745.

This sequence belongs to the protein kinase superfamily. AGC Ser/Thr protein kinase family. S6 kinase subfamily. Forms a complex with either MAPK1/ERK2 or MAPK3/ERK1 in quiescent cells which transiently dissociates following mitogenic stimulation. Also associates with MAPK14/p38-alpha. Activated RPS6KA4 associates with and phosphorylates the NF-kappa-B p65 subunit RELA. The cofactor is Mg(2+). In terms of processing, ser-343 and Thr-568 phosphorylation is required for kinase activity. Ser-343 and Ser-196 are autophosphorylated by the C-terminal kinase domain, and their phosphorylation is essential for the catalytic activity of the N-terminal kinase domain. Phosphorylated at Ser-343, Thr-568 and Thr-687 by MAPK1/ERK2, MAPK3/ERK1 and MAPK14/p38-alpha. Autophosphorylated at Ser-737 and Ser-745 by the N-terminal kinase domain.

It localises to the nucleus. It carries out the reaction L-seryl-[protein] + ATP = O-phospho-L-seryl-[protein] + ADP + H(+). The enzyme catalyses L-threonyl-[protein] + ATP = O-phospho-L-threonyl-[protein] + ADP + H(+). Activated by phosphorylation at Ser-343, Thr-568 and Thr-687 by MAPK1/ERK2, MAPK3/ERK1 and MAPK14/p38-alpha, and by further autophosphorylation of Ser-196, Ser-360 and Ser-365 by the activated C-terminal kinase domain. In terms of biological role, serine/threonine-protein kinase that is required for the mitogen or stress-induced phosphorylation of the transcription factors CREB1 and ATF1 and for the regulation of the transcription factor RELA, and that contributes to gene activation by histone phosphorylation and functions in the regulation of inflammatory genes. Phosphorylates CREB1 and ATF1 in response to mitogenic or stress stimuli such as UV-C irradiation, epidermal growth factor (EGF) and anisomycin. Plays an essential role in the control of RELA transcriptional activity in response to TNF. Phosphorylates 'Ser-10' of histone H3 in response to mitogenics, stress stimuli and EGF, which results in the transcriptional activation of several immediate early genes, including proto-oncogenes c-fos/FOS and c-jun/JUN. May also phosphorylate 'Ser-28' of histone H3. Mediates the mitogen- and stress-induced phosphorylation of high mobility group protein 1 (HMGN1/HMG14). In lipopolysaccharide-stimulated primary macrophages, acts downstream of the Toll-like receptor TLR4 to limit the production of pro-inflammatory cytokines. Functions probably by inducing transcription of the MAP kinase phosphatase DUSP1 and the anti-inflammatory cytokine interleukin 10 (IL10), via CREB1 and ATF1 transcription factors. This chain is Ribosomal protein S6 kinase alpha-4 (RPS6KA4), found in Homo sapiens (Human).